We begin with the raw amino-acid sequence, 226 residues long: Fibrillarin-like rRNA/tRNA 2'-O-methyltransferase (226 aa).

S-adenosyl-L-methionine-binding positions include 85–86 (TT), 104–105 (EF), 129–130 (DA), and 149–152 (DVAQ).

This sequence belongs to the methyltransferase superfamily. Fibrillarin family. In terms of assembly, interacts with nop5. Component of box C/D small ribonucleoprotein (sRNP) particles that contain rpl7ae, FlpA and nop5, plus a guide RNA.

Involved in pre-rRNA and tRNA processing. Utilizes the methyl donor S-adenosyl-L-methionine to catalyze the site-specific 2'-hydroxyl methylation of ribose moieties in rRNA and tRNA. Site specificity is provided by a guide RNA that base pairs with the substrate. Methylation occurs at a characteristic distance from the sequence involved in base pairing with the guide RNA. This is Fibrillarin-like rRNA/tRNA 2'-O-methyltransferase from Thermococcus sibiricus (strain DSM 12597 / MM 739).